Reading from the N-terminus, the 387-residue chain is Cyclin-B1-4 (387 aa).

Residues 1–29 (MASSRVSDLPHQRGIAGEIKPKNVAGHGR) form a disordered region.

This sequence belongs to the cyclin family. Cyclin AB subfamily.

The chain is Cyclin-B1-4 (CYCB1-4) from Arabidopsis thaliana (Mouse-ear cress).